A 168-amino-acid polypeptide reads, in one-letter code: MQTIEQQITDLIQETLSDMGFELVLVRVKGLSSKVVEILIDRLDDQKVTIEDCTKASNTISAILDVEDLIEEAYYLEVSSSGVERPLVKFENYKRFIGREVKIKLKELLNGRSRYQGTIIEAKDDKVYLKWEDQEVIINYDLIKSANLVLTEEMFKKLLGSENKSNTR.

Belongs to the RimP family.

It localises to the cytoplasm. Required for maturation of 30S ribosomal subunits. The polypeptide is Ribosome maturation factor RimP (Rickettsia bellii (strain OSU 85-389)).